An 883-amino-acid polypeptide reads, in one-letter code: Receptor-like protein 40 (883 aa).

The N-terminal stretch at 1–21 is a signal peptide; the sequence is MSELLFSLNFLLLLLLSCVSP. The Extracellular segment spans residues 22–846; it reads SSFFTFNNPV…EDEQVLNWKA (825 aa). N-linked (GlcNAc...) asparagine glycans are attached at residues asparagine 58, asparagine 91, and asparagine 109. 2 LRR repeats span residues 97–121 and 122–143; these read FHHL…KFGM and LNNL…PFSF. An N-linked (GlcNAc...) asparagine glycan is attached at asparagine 145. LRR repeat units follow at residues 146 to 169, 170 to 195, 197 to 219, 220 to 244, 246 to 267, 268 to 291, 293 to 316, 317 to 340, 342 to 364, 365 to 390, 391 to 412, 413 to 437, 439 to 462, and 463 to 486; these read LSML…ARNL, RKLR…LFEL, HIIY…EFGN, LNKL…ISNL, QLTE…VQNL, TKLS…LFTM, FLSY…SSSS, SRLE…ISKL, NLKE…LFSS, LKSL…SYIP, STLE…VFKT, LHNL…LWSL, RLSS…VLVN, and SSVQ…PLSI. N-linked (GlcNAc...) asparagine glycosylation is found at asparagine 189, asparagine 207, asparagine 243, and asparagine 266. Asparagine 305 and asparagine 312 each carry an N-linked (GlcNAc...) asparagine glycan. Asparagine 352 carries N-linked (GlcNAc...) asparagine glycosylation. Asparagine 462 carries N-linked (GlcNAc...) asparagine glycosylation. The LRR 17; degenerate repeat unit spans residues 487-506; sequence NYFSAIDNRFGGDIPLSICN. Asparagine 506 and asparagine 519 each carry an N-linked (GlcNAc...) asparagine glycan. LRR repeat units follow at residues 507–528, 529–552, 554–576, 578–600, 601–624, 627–651, 701–724, 725–747, 748–772, and 774–797; these read RSSL…PPCL, SNLL…YYED, PLRS…LINC, ALQF…LKAL, PKLQ…NEGP, FPEL…FFVN, TSSA…IGLL, KALI…SFAN, LKKM…LRTL, and FLAY…QITG. N-linked (GlcNAc...) asparagine glycosylation is present at asparagine 575. Residue asparagine 731 is glycosylated (N-linked (GlcNAc...) asparagine). The N-linked (GlcNAc...) asparagine glycan is linked to asparagine 779. A helical membrane pass occupies residues 847–867; the sequence is VAIGYGIGVLLGLAIAQLISL. Over 868-883 the chain is Cytoplasmic; the sequence is YKPKWLASLVIKSRNC.

Belongs to the RLP family.

The protein localises to the cell membrane. In Arabidopsis thaliana (Mouse-ear cress), this protein is Receptor-like protein 40.